Here is a 326-residue protein sequence, read N- to C-terminus: Elongation factor Ts (326 aa).

An involved in Mg(2+) ion dislocation from EF-Tu region spans residues 80 to 83 (TDFV).

Belongs to the EF-Ts family.

The protein resides in the cytoplasm. Functionally, associates with the EF-Tu.GDP complex and induces the exchange of GDP to GTP. It remains bound to the aminoacyl-tRNA.EF-Tu.GTP complex up to the GTP hydrolysis stage on the ribosome. The protein is Elongation factor Ts of Rhodopirellula baltica (strain DSM 10527 / NCIMB 13988 / SH1).